The sequence spans 88 residues: UPF0297 protein SPCG_0205 (88 aa).

It belongs to the UPF0297 family.

This is UPF0297 protein SPCG_0205 from Streptococcus pneumoniae (strain CGSP14).